The chain runs to 606 residues: Albumin A (606 aa).

The N-terminal stretch at 1-18 (MKWITLICLLISSTLIES) is a signal peptide. Residues 19–24 (RIIFKR) constitute a propeptide that is removed on maturation. 3 Albumin domains span residues 22 to 211 (FKRD…ELMK), 212 to 401 (HSHS…RFMN), and 402 to 599 (EAKE…VLIE). Residue His30 participates in Cu cation binding. Intrachain disulfides connect Cys80/Cys89, Cys102/Cys118, Cys117/Cys128, Cys148/Cys193, Cys192/Cys201, Cys224/Cys270, Cys269/Cys277, Cys289/Cys303, Cys302/Cys313, Cys340/Cys383, Cys382/Cys391, Cys414/Cys460, Cys459/Cys470, Cys483/Cys499, Cys498/Cys509, Cys536/Cys581, and Cys580/Cys589.

Belongs to the ALB/AFP/VDB family. Plasma.

Its subcellular location is the secreted. Binds water, Ca(2+), Na(+), K(+), fatty acids, hormones, bilirubin and drugs. Its main function is the regulation of the colloidal osmotic pressure of blood. This is Albumin A (alb-a) from Xenopus laevis (African clawed frog).